The sequence spans 203 residues: Endo-type membrane-bound lytic murein transglycosylase A (203 aa).

The signal sequence occupies residues 1–15 (MKLRWFAFLVVILAG). A lipid anchor (N-palmitoyl cysteine) is attached at Cys-16. Cys-16 carries S-diacylglycerol cysteine lipidation.

This sequence belongs to the transglycosylase Slt family.

The protein localises to the cell outer membrane. The catalysed reaction is Endolytic cleavage of the (1-&gt;4)-beta-glycosidic linkage between N-acetylmuramic acid (MurNAc) and N-acetylglucosamine (GlcNAc) residues in peptidoglycan with concomitant formation of a 1,6-anhydrobond in the MurNAc residue.. In terms of biological role, murein-degrading enzyme. May play a role in recycling of muropeptides during cell elongation and/or cell division. Preferentially cleaves at a distance of more than two disaccharide units from the ends of the glycan chain. The polypeptide is Endo-type membrane-bound lytic murein transglycosylase A (Salmonella paratyphi C (strain RKS4594)).